We begin with the raw amino-acid sequence, 288 residues long: MAFEQRIEAAMAAAIARGQGSEAPSKLATALDYAVTPGGARIRPTLLLSVATACGDDRPALSDAAAVALELIHCASLVHDDLPCFDDAEIRRGKPTVHRAYSEPLAILTGDSLIVMGFEVLARAAADQPQRALQLVTALAVRTGMPMGICAGQGWESESQINLSAYHRAKTGALFIAATQMGAIAAGYEAEPWEELGARIGEAFQVADDLRDALCDAETLGKPAGQDEIHARPNAVREYGVEGAAKRLKDILGGAIASIPSCPGEAMLAEMVRRYAEKIVPAQVAARV.

2 residues coordinate isopentenyl diphosphate: Arg-43 and His-73. Residues Asp-80 and Asp-86 each contribute to the Mg(2+) site. Residue Arg-91 participates in (2E,6E)-farnesyl diphosphate binding. Arg-92 contacts isopentenyl diphosphate. Residues Lys-170, Thr-171, and Gln-205 each contribute to the (2E,6E)-farnesyl diphosphate site.

The protein belongs to the FPP/GGPP synthase family. Mg(2+) serves as cofactor.

The enzyme catalyses isopentenyl diphosphate + (2E,6E)-farnesyl diphosphate = (2E,6E,10E)-geranylgeranyl diphosphate + diphosphate. It participates in isoprenoid biosynthesis; geranylgeranyl diphosphate biosynthesis; geranylgeranyl diphosphate from farnesyl diphosphate and isopentenyl diphosphate: step 1/1. In terms of biological role, catalyzes the condensation of farnesyl diphosphate (FPP) and isopentenyl diphosphate (IPP) to yield geranylgeranyl diphosphate (GGPP) needed for biosynthesis of carotenoids and diterpenes. The sequence is that of Geranylgeranyl diphosphate synthase (crtE) from Cereibacter sphaeroides (strain ATCC 17023 / DSM 158 / JCM 6121 / CCUG 31486 / LMG 2827 / NBRC 12203 / NCIMB 8253 / ATH 2.4.1.) (Rhodobacter sphaeroides).